Reading from the N-terminus, the 963-residue chain is Protein translocase subunit SecA (963 aa).

ATP is bound by residues glutamine 87, 105–109 (GEGKT), and aspartate 524. Zn(2+)-binding residues include cysteine 946, cysteine 948, cysteine 957, and histidine 958.

The protein belongs to the SecA family. As to quaternary structure, monomer and homodimer. Part of the essential Sec protein translocation apparatus which comprises SecA, SecYEG and auxiliary proteins SecDF-YajC and YidC. Zn(2+) serves as cofactor.

It localises to the cell inner membrane. The protein localises to the cytoplasm. It catalyses the reaction ATP + H2O + cellular proteinSide 1 = ADP + phosphate + cellular proteinSide 2.. Functionally, part of the Sec protein translocase complex. Interacts with the SecYEG preprotein conducting channel. Has a central role in coupling the hydrolysis of ATP to the transfer of proteins into and across the cell membrane, serving both as a receptor for the preprotein-SecB complex and as an ATP-driven molecular motor driving the stepwise translocation of polypeptide chains across the membrane. This Methylobacterium radiotolerans (strain ATCC 27329 / DSM 1819 / JCM 2831 / NBRC 15690 / NCIMB 10815 / 0-1) protein is Protein translocase subunit SecA.